Here is a 333-residue protein sequence, read N- to C-terminus: Mevalonate kinase (333 aa).

109–119 (PVGAGLGSSAA) is a binding site for ATP. The active-site Proton acceptor is D160.

This sequence belongs to the GHMP kinase family. Mevalonate kinase subfamily. As to quaternary structure, homodimer. Mg(2+) serves as cofactor.

Its subcellular location is the cytoplasm. It catalyses the reaction (R)-mevalonate + ATP = (R)-5-phosphomevalonate + ADP + H(+). Its pathway is isoprenoid biosynthesis; isopentenyl diphosphate biosynthesis via mevalonate pathway; isopentenyl diphosphate from (R)-mevalonate: step 1/3. Functionally, catalyzes the phosphorylation of (R)-mevalonate (MVA) to (R)-mevalonate 5-phosphate (MVAP). Functions in the mevalonate (MVA) pathway leading to isopentenyl diphosphate (IPP), a key precursor for the biosynthesis of isoprenoid compounds such as archaeal membrane lipids. This chain is Mevalonate kinase, found in Thermococcus sibiricus (strain DSM 12597 / MM 739).